The sequence spans 384 residues: Glucans biosynthesis protein C (384 aa).

Helical transmembrane passes span 17–37 (AWLM…THSW), 54–74 (FIHA…SYML), 91–111 (VGIP…ILLQ), 140–160 (LWFL…FTWF), 173–193 (AISL…YAAI), 212–232 (FIVM…LAFI), 240–260 (FTTP…AYLL), 274–294 (TESV…FSLG), 311–331 (ASLF…AYIT), and 338–358 (LIGF…LYEI).

It belongs to the acyltransferase 3 family. OpgC subfamily.

It localises to the cell membrane. Its pathway is glycan metabolism; osmoregulated periplasmic glucan (OPG) biosynthesis. Necessary for the succinyl substitution of periplasmic glucans. Could catalyze the transfer of succinyl residues from the cytoplasmic side of the membrane to the nascent glucan backbones on the periplasmic side of the membrane. In Salmonella typhi, this protein is Glucans biosynthesis protein C.